A 258-amino-acid chain; its full sequence is Neurotrophin-3 (258 aa).

Residues 1–18 form the signal peptide; sequence MSILFYVIFLAYLRGIQG. A propeptide spanning residues 19-139 is cleaved from the precursor; sequence NNMDQRSLPE…TNRTSPRRKR (121 aa). Residues 60-85 form a disordered region; the sequence is QSTLPKAEAPREPEQGEATRSEFQPM. Positions 67–79 are enriched in basic and acidic residues; the sequence is EAPREPEQGEATR. A glycan (N-linked (GlcNAc...) asparagine) is linked at asparagine 131. Cystine bridges form between cysteine 153-cysteine 218, cysteine 196-cysteine 247, and cysteine 206-cysteine 249.

This sequence belongs to the NGF-beta family. As to expression, brain and peripheral tissues.

It localises to the secreted. Functionally, seems to promote the survival of visceral and proprioceptive sensory neurons. This Rattus norvegicus (Rat) protein is Neurotrophin-3 (Ntf3).